A 24-amino-acid chain; its full sequence is Xenoposin-precursor fragment B1 (24 aa).

Expressed by the skin glands.

It is found in the secreted. Its function is as follows. Has antibacterial activity. In Xenopus borealis (Kenyan clawed frog), this protein is Xenoposin-precursor fragment B1.